A 399-amino-acid polypeptide reads, in one-letter code: MSSTTKVSSAVMQTYNRFPITATKGKGSFLWDDNGEKYLDYTSGIATCNLGHVPDNVQHAISNQLKDLWHCSNLYHIPSQEKLAALLTEYSCLDQVFFCNSGAEANEAAIKIAKKYAKDKGYDDRTEIITFEQSFHGRTGSTMAATAQEKIHQGFTPLTEGFRYLPFNNKESLSEIDNGKTSAVLLEVIQGEGGIHTAEKDWLKQLAAICKQADILLMIDEIQTGIGRTGSLFAYQPYGIEPDVITVAKGLGSGFPIGAMLAKQHIAASFSPGTHGSTFGGNPVAAAAGIATLKEILSDGFLENCKEGQEELFNQLKSIKEISPLIKDIRGKGYLMGIEVMNQASAWIEKLREKQILVLPAGEKVVRILPPLTTTKEELQICIQALKEVALELGGNTNG.

Residues 102-103 (GA) and Phe135 contribute to the pyridoxal 5'-phosphate site. A N(2)-acetyl-L-ornithine-binding site is contributed by Arg138. 220 to 223 (DEIQ) lines the pyridoxal 5'-phosphate pocket. N6-(pyridoxal phosphate)lysine is present on Lys249. Position 277 (Ser277) interacts with N(2)-acetyl-L-ornithine. Position 278 (Thr278) interacts with pyridoxal 5'-phosphate.

The protein belongs to the class-III pyridoxal-phosphate-dependent aminotransferase family. ArgD subfamily. Homodimer. It depends on pyridoxal 5'-phosphate as a cofactor.

It localises to the cytoplasm. The catalysed reaction is N(2)-acetyl-L-ornithine + 2-oxoglutarate = N-acetyl-L-glutamate 5-semialdehyde + L-glutamate. Its pathway is amino-acid biosynthesis; L-arginine biosynthesis; N(2)-acetyl-L-ornithine from L-glutamate: step 4/4. The chain is Acetylornithine aminotransferase from Oceanobacillus iheyensis (strain DSM 14371 / CIP 107618 / JCM 11309 / KCTC 3954 / HTE831).